Here is an 86-residue protein sequence, read N- to C-terminus: Toxin Td8 (86 aa).

Positions 1–20 (MTRFVLFLSCFFLIGMVVEC) are cleaved as a signal peptide. The LCN-type CS-alpha/beta domain maps to 21–83 (KDGYLVGDDG…IWNSATNRCR (63 aa)). 4 disulfide bridges follow: Cys-31/Cys-82, Cys-35/Cys-57, Cys-43/Cys-63, and Cys-47/Cys-65. Arg-83 is subject to Arginine amide.

As to expression, expressed by the venom gland.

It localises to the secreted. Functionally, beta toxins bind voltage-independently at site-4 of sodium channels (Nav) and shift the voltage of activation toward more negative potentials thereby affecting sodium channel activation and promoting spontaneous and repetitive firing. The protein is Toxin Td8 of Tityus discrepans (Venezuelan scorpion).